The primary structure comprises 526 residues: Microphthalmia-associated transcription factor (526 aa).

Positions 20–54 are disordered; the sequence is EPKTYYELKSQPLKSSSSAEHSGASKPPLSSSTMT. Low complexity predominate over residues 34-44; that stretch reads SSSSAEHSGAS. A Phosphoserine; by MAPK modification is found at serine 180. A Glycyl lysine isopeptide (Lys-Gly) (interchain with G-Cter in SUMO) cross-link involves residue lysine 289. Residues 311–364 form the bHLH domain; that stretch reads QKKDNHNLIERRRRFNINDRIKELGTLIPKSNDPDMRWNKGTILKASVDYIRKL. Residues 355–401 are a coiled coil; the sequence is KASVDYIRKLQREQQRAKDLENRQKKLEHANRHLLLRVQELEMQARA. Residues 374 to 395 are leucine-zipper; it reads LENRQKKLEHANRHLLLRVQEL. Serine 405 is subject to Phosphoserine; by GSK3. Phosphoserine is present on serine 414. Lysine 423 is covalently cross-linked (Glycyl lysine isopeptide (Lys-Gly) (interchain with G-Cter in SUMO)). Phosphoserine is present on serine 491. A disordered region spans residues 496 to 526; it reads TDPLLSSVSPGASKTSSRRSSMSAEETEHAC. Low complexity predominate over residues 507–519; it reads ASKTSSRRSSMSA. Serine 516 is subject to Phosphoserine; by RPS6KA1.

This sequence belongs to the MiT/TFE family. Homodimer or heterodimer; dimerization is mediated via the coiled coil region. Efficient DNA binding requires dimerization with another bHLH protein. Binds DNA in the form of homodimer or heterodimer with either TFE3, TFEB or TFEC. Identified in a complex with HINT1 and CTNNB1. Interacts with KARS1. Interacts with VSX2. In terms of processing, phosphorylation at Ser-405 significantly enhances the ability to bind the tyrosinase promoter. Phosphorylated at Ser-180 and Ser-516 following KIT signaling, triggering a short live activation: Phosphorylation at Ser-180 and Ser-516 by MAPK and RPS6KA1, respectively, activate the transcription factor activity but also promote ubiquitination and subsequent degradation by the proteasome. Phosphorylated in response to blue light (415nm). Post-translationally, ubiquitinated following phosphorylation at Ser-180, leading to subsequent degradation by the proteasome. Deubiquitinated by USP13, preventing its degradation.

The protein localises to the nucleus. Its subcellular location is the cytoplasm. In terms of biological role, transcription factor that regulates the expression of genes with essential roles in cell differentiation, proliferation and survival. Binds to M-boxes (5'-TCATGTG-3') and symmetrical DNA sequences (E-boxes) (5'-CACGTG-3') found in the promoters of target genes, such as BCL2 and tyrosinase (TYR). Plays an important role in melanocyte development by regulating the expression of tyrosinase (TYR) and tyrosinase-related protein 1 (TYRP1). Plays a critical role in the differentiation of various cell types, such as neural crest-derived melanocytes, mast cells, osteoclasts and optic cup-derived retinal pigment epithelium. This is Microphthalmia-associated transcription factor (Mitf) from Rattus norvegicus (Rat).